The following is a 442-amino-acid chain: tRNA-2-methylthio-N(6)-dimethylallyladenosine synthase (442 aa).

The region spanning 2–117 (QGLYIKSYGC…LPELIIKARR (116 aa)) is the MTTase N-terminal domain. The [4Fe-4S] cluster site is built by Cys-11, Cys-47, Cys-80, Cys-157, Cys-161, and Cys-164. The 232-residue stretch at 143 to 374 (KNQEVSAFIS…QELLREQQLA (232 aa)) folds into the Radical SAM core domain. The TRAM domain maps to 377–442 (RNMIGQTCSV…QNSVTGIVVN (66 aa)).

Belongs to the methylthiotransferase family. MiaB subfamily. Monomer. It depends on [4Fe-4S] cluster as a cofactor.

It localises to the cytoplasm. It catalyses the reaction N(6)-dimethylallyladenosine(37) in tRNA + (sulfur carrier)-SH + AH2 + 2 S-adenosyl-L-methionine = 2-methylsulfanyl-N(6)-dimethylallyladenosine(37) in tRNA + (sulfur carrier)-H + 5'-deoxyadenosine + L-methionine + A + S-adenosyl-L-homocysteine + 2 H(+). Its function is as follows. Catalyzes the methylthiolation of N6-(dimethylallyl)adenosine (i(6)A), leading to the formation of 2-methylthio-N6-(dimethylallyl)adenosine (ms(2)i(6)A) at position 37 in tRNAs that read codons beginning with uridine. In Ehrlichia chaffeensis (strain ATCC CRL-10679 / Arkansas), this protein is tRNA-2-methylthio-N(6)-dimethylallyladenosine synthase.